Reading from the N-terminus, the 267-residue chain is Apolipoprotein A-I (267 aa).

The signal sequence occupies residues 1–18; it reads MKAAVLTLAVLFLTGSQA. Tandem repeats lie at residues 68–89 and 90–111. The tract at residues 68-267 is 10 X approximate tandem repeats; it reads LKLLDNWDSM…EEYTKKLNTQ (200 aa). At methionine 110 the chain carries Methionine sulfoxide. The 3; half-length repeat unit spans residues 112–122; the sequence is KDLEEVKAKVQ. 5 repeat units span residues 123-144, 145-166, 167-188, 189-210, and 211-232. At methionine 136 the chain carries Methionine sulfoxide. Residues 233-243 form a 9; half-length repeat; the sequence is PALEDLRQGLL. Repeat unit 10 spans residues 244–267; the sequence is PVLESFKVSFLSALEEYTKKLNTQ.

It belongs to the apolipoprotein A1/A4/E family. Homodimer. Interacts with APOA1BP and CLU. Component of a sperm activating protein complex (SPAP), consisting of APOA1, an immunoglobulin heavy chain, an immunoglobulin light chain and albumin. Interacts with NDRG1. Interacts with SCGB3A2. Interacts with NAXE and YJEFN3. In terms of processing, glycosylated. Post-translationally, palmitoylated. As to expression, major protein of plasma HDL, also found in chylomicrons.

It is found in the secreted. Its function is as follows. Participates in the reverse transport of cholesterol from tissues to the liver for excretion by promoting cholesterol efflux from tissues and by acting as a cofactor for the lecithin cholesterol acyltransferase (LCAT). As part of the SPAP complex, activates spermatozoa motility. This chain is Apolipoprotein A-I (APOA1), found in Pongo abelii (Sumatran orangutan).